Reading from the N-terminus, the 275-residue chain is Phosphatidylglycerol--prolipoprotein diacylglyceryl transferase (275 aa).

Helical transmembrane passes span 18-38 (IEVH…YFIA), 55-75 (IIFW…VIFQ), and 89-109 (IWHG…TGVI). Arg137 is an a 1,2-diacyl-sn-glycero-3-phospho-(1'-sn-glycerol) binding site. 2 consecutive transmembrane segments (helical) span residues 203–223 (IGET…FVEG) and 235–255 (IRVA…MIIY).

The protein belongs to the Lgt family.

It is found in the cell membrane. It catalyses the reaction L-cysteinyl-[prolipoprotein] + a 1,2-diacyl-sn-glycero-3-phospho-(1'-sn-glycerol) = an S-1,2-diacyl-sn-glyceryl-L-cysteinyl-[prolipoprotein] + sn-glycerol 1-phosphate + H(+). It participates in protein modification; lipoprotein biosynthesis (diacylglyceryl transfer). Catalyzes the transfer of the diacylglyceryl group from phosphatidylglycerol to the sulfhydryl group of the N-terminal cysteine of a prolipoprotein, the first step in the formation of mature lipoproteins. This Staphylococcus carnosus (strain TM300) protein is Phosphatidylglycerol--prolipoprotein diacylglyceryl transferase.